Here is a 51-residue protein sequence, read N- to C-terminus: Methionine aminopeptidase (51 aa).

This sequence belongs to the peptidase M24A family. Methionine aminopeptidase type 1 subfamily. In terms of assembly, monomer. Co(2+) serves as cofactor. Requires Zn(2+) as cofactor. It depends on Mn(2+) as a cofactor. The cofactor is Fe(2+).

The enzyme catalyses Release of N-terminal amino acids, preferentially methionine, from peptides and arylamides.. Functionally, removes the N-terminal methionine from nascent proteins. The N-terminal methionine is often cleaved when the second residue in the primary sequence is small and uncharged (Met-Ala-, Cys, Gly, Pro, Ser, Thr, or Val). Requires deformylation of the N(alpha)-formylated initiator methionine before it can be hydrolyzed. In Geobacillus stearothermophilus (Bacillus stearothermophilus), this protein is Methionine aminopeptidase (map).